We begin with the raw amino-acid sequence, 432 residues long: MSAPKVQLLLTGNELMTGDIVDSNSAMMAQVLKDIGLGVNRKVTVADDLALLVNEITYMASTSDILIINGGLGPTVDDLTAQALALAIEDELSQHPQALTHLTNWCHQRGAELNGPNLKQAILPKSCQIIANKNGSAVGFYVRFNHCDIYCTPGVPHELETMLIKQIVPAISADLPSDLITDVTRLQVFGLGESSLQKIINEQLPQWPTAIDLGFRAGMPLLEVKLTTNTKKGLALKPIWHNKLADVLGDHLISEIQDKPKSLAEHLLHQLQQHNLKVTTAESCTGGLIASKLTEISGSSMNFEAGYVTYSNKMKTAMLDVPAKLFEQYGAVSEQVVVAMAKGSLIKSTADLTIAVSGVAGPNGGTEEKPVGTVWLAWGSIDNIKTQCLLLPYKRVKFQEFVAAIGLDLLRRYQQNITSIPNYIAERAFTDQ.

Belongs to the CinA family.

The protein is CinA-like protein of Colwellia psychrerythraea (strain 34H / ATCC BAA-681) (Vibrio psychroerythus).